A 228-amino-acid chain; its full sequence is Histidine decarboxylase (228 aa).

Residue histidine 30 participates in substrate binding. The residue at position 143 (lysine 143) is an N6-(pyridoxal phosphate)lysine.

The protein belongs to the group II decarboxylase family. In terms of assembly, homotetramer. Pyridoxal 5'-phosphate serves as cofactor.

The enzyme catalyses L-histidine + H(+) = histamine + CO2. This is Histidine decarboxylase (hdc) from Raoultella ornithinolytica (Klebsiella ornithinolytica).